The chain runs to 156 residues: ATP synthase subunit b (156 aa).

A helical transmembrane segment spans residues 4–26 (GATFWGPMISFALFVWFTMKFVW).

Belongs to the ATPase B chain family. In terms of assembly, F-type ATPases have 2 components, F(1) - the catalytic core - and F(0) - the membrane proton channel. F(1) has five subunits: alpha(3), beta(3), gamma(1), delta(1), epsilon(1). F(0) has three main subunits: a(1), b(2) and c(10-14). The alpha and beta chains form an alternating ring which encloses part of the gamma chain. F(1) is attached to F(0) by a central stalk formed by the gamma and epsilon chains, while a peripheral stalk is formed by the delta and b chains.

It is found in the cell inner membrane. F(1)F(0) ATP synthase produces ATP from ADP in the presence of a proton or sodium gradient. F-type ATPases consist of two structural domains, F(1) containing the extramembraneous catalytic core and F(0) containing the membrane proton channel, linked together by a central stalk and a peripheral stalk. During catalysis, ATP synthesis in the catalytic domain of F(1) is coupled via a rotary mechanism of the central stalk subunits to proton translocation. Its function is as follows. Component of the F(0) channel, it forms part of the peripheral stalk, linking F(1) to F(0). In Halorhodospira halophila (strain DSM 244 / SL1) (Ectothiorhodospira halophila (strain DSM 244 / SL1)), this protein is ATP synthase subunit b.